The chain runs to 140 residues: Actin-depolymerizing factor 8 (140 aa).

At S6 the chain carries Phosphoserine. Residues 7 to 139 (GMHVNDECKI…SLDIIKGRLN (133 aa)) form the ADF-H domain.

Belongs to the actin-binding proteins ADF family. In terms of tissue distribution, expressed in the root trichoblast cells and developed root hairs.

The protein localises to the cytoplasm. It localises to the cytoskeleton. Its function is as follows. Actin-depolymerizing protein. Severs actin filaments (F-actin) and binds to actin monomers. The polypeptide is Actin-depolymerizing factor 8 (ADF8) (Arabidopsis thaliana (Mouse-ear cress)).